The following is a 1066-amino-acid chain: Kinesin-like protein Klp61F (1066 aa).

The region spanning 19–356 is the Kinesin motor domain; that stretch reads NIQVYVRVRP…LEYAHRAKNI (338 aa). 103 to 110 contacts ATP; it reads GQTGTGKT. A coiled-coil region spans residues 362–462; it reads VNQKLTKKTV…KTEENLLNTK (101 aa). Thr520 carries the phosphothreonine modification. Coiled coils occupy residues 540–569, 639–738, 808–875, and 889–918; these read DRMQDNLEMIGGSLNLYQDQQAALKEQLSQ, LMSK…QIKN, CSML…LITE, and DLVQESNRQFSEHAEHQRQQLQICEQELVR. Thr933 carries the post-translational modification Phosphothreonine. A Phosphoserine modification is found at Ser949. Residues 990-1002 show a composition bias toward polar residues; that stretch reads ELSETETIMNSTP. Disordered stretches follow at residues 990-1009 and 1016-1066; these read ELSETETIMNSTPIEPVDGV and GTTR…ENVA. Positions 1033 to 1051 are enriched in low complexity; the sequence is GGKRSSSLSRSLTPSKTSP. The residue at position 1043 (Ser1043) is a Phosphoserine. The residue at position 1045 (Thr1045) is a Phosphothreonine. Ser1050 and Ser1054 each carry phosphoserine.

The protein belongs to the TRAFAC class myosin-kinesin ATPase superfamily. Kinesin family. BimC subfamily. As to quaternary structure, homotetramer. Consists of two pairs of polypeptides associated by coiled-coil interactions to form two homodimers. The homodimers are linked by lateral interactions between their coiled-coil regions to form a bipolar homotetramer consisting of a central rod with two motor domains projecting from either end. Parallel coiled coils extend from each pair of motor heads, switch to two antiparallel coiled coils in the central region and then back to parallel coiled coils. Interacts with Wee1. Post-translationally, phosphorylation is required for localization to mitotic spindles. Phosphorylation of Thr-933 during mitosis controls association with the spindle apparatus. Phosphorylated in vitro by Wee1.

It localises to the cytoplasm. The protein resides in the cytoskeleton. The protein localises to the spindle. Its subcellular location is the spindle pole. Important role in mitotic dividing cells. Microtubule motor required for spindle body separation. Slow plus-end directed microtubule motor capable of cross-linking and sliding apart antiparallel microtubules, thereby pushing apart the associated spindle poles during spindle assembly and function. Forms cross-links between microtubules within interpolar microtubule bundles. Contributes to the length of the metaphase spindle, maintains the prometaphase spindle by antagonizing Ncd, drives anaphase B, and also contributes to normal chromosome congression, kinetochore spacing, and anaphase A rates. Displays microtubule-stimulated ATPase activity. Required for normal fusome organization. Required in non-mitotic cells for transport of secretory proteins from the Golgi complex to the cell surface. In Drosophila melanogaster (Fruit fly), this protein is Kinesin-like protein Klp61F.